Reading from the N-terminus, the 287-residue chain is Nucleotide-binding protein VIBHAR_03667 (287 aa).

An ATP-binding site is contributed by 8–15 (GHSGAGKS). 56–59 (DIRN) provides a ligand contact to GTP.

The protein belongs to the RapZ-like family.

Displays ATPase and GTPase activities. The chain is Nucleotide-binding protein VIBHAR_03667 from Vibrio campbellii (strain ATCC BAA-1116).